The sequence spans 168 residues: RNA pyrophosphohydrolase (168 aa).

In terms of domain architecture, Nudix hydrolase spans 8–160 (PYRPCVGLAI…KRQVYERVAR (153 aa)). A Nudix box motif is present at residues 47-68 (GGIDKGEEPYEAALRELYEETS).

This sequence belongs to the Nudix hydrolase family. RppH subfamily. A divalent metal cation serves as cofactor.

Accelerates the degradation of transcripts by removing pyrophosphate from the 5'-end of triphosphorylated RNA, leading to a more labile monophosphorylated state that can stimulate subsequent ribonuclease cleavage. This is RNA pyrophosphohydrolase from Azorhizobium caulinodans (strain ATCC 43989 / DSM 5975 / JCM 20966 / LMG 6465 / NBRC 14845 / NCIMB 13405 / ORS 571).